The sequence spans 388 residues: Deoxyuridine 5'-triphosphate nucleotidohydrolase (388 aa).

Residues 77-88 (EEKYDKEQHPGE) show a composition bias toward basic and acidic residues. Disordered stretches follow at residues 77–96 (EEKY…SPLP) and 336–388 (THTP…PRHP). A compositionally biased stretch (acidic residues) spans 351–363 (VDDDVDETEEDEK).

It belongs to the dUTPase family. The cofactor is Mg(2+).

The protein localises to the virion. The catalysed reaction is dUTP + H2O = dUMP + diphosphate + H(+). Its pathway is pyrimidine metabolism; dUMP biosynthesis; dUMP from dCTP (dUTP route): step 2/2. In terms of biological role, involved in nucleotide metabolism: produces dUMP, the immediate precursor of thymidine nucleotides and decreases the intracellular concentration of dUTP to avoid uracil incorporation into viral DNA. This Human cytomegalovirus (strain AD169) (HHV-5) protein is Deoxyuridine 5'-triphosphate nucleotidohydrolase.